Reading from the N-terminus, the 284-residue chain is Homeobox protein SIX1 (284 aa).

The segment at residues 124–183 is a DNA-binding region (homeobox); it reads GEETSYCFKEKSRGVLREWYAHNPYPSPREKRELAEATGLTTTQVSNWFKNRRQRDRAAE. The segment at 168-269 is disordered; sequence VSNWFKNRRQ…LQTHQHQLQD (102 aa). Over residues 179–190 the composition is skewed to basic and acidic residues; it reads DRAAEAKERENT. Polar residues predominate over residues 242 to 269; the sequence is RSSNYSLPGLTASQPSHGLQTHQHQLQD.

It belongs to the SIX/Sine oculis homeobox family. In terms of assembly, interacts with DACH1. Interacts with EYA1. Interacts with EYA2. Interacts with CDH1. Interacts with TBX18. Interacts with CEBPA. Interacts with CEBPB. Interacts with EBF2. Phosphorylated during interphase; becomes hyperphosphorylated during mitosis. Hyperphosphorylation impairs binding to promoter elements. Post-translationally, ubiquitinated by the anaphase promoting complex (APC), leading to its proteasomal degradation. Specifically expressed in skeletal muscle.

It is found in the nucleus. The protein resides in the cytoplasm. Transcription factor that is involved in the regulation of cell proliferation, apoptosis and embryonic development. Plays an important role in the development of several organs, including kidney, muscle and inner ear. Depending on context, functions as a transcriptional repressor or activator. Lacks an activation domain, and requires interaction with EYA family members for transcription activation. Mediates nuclear translocation of EYA1 and EYA2. Binds the 5'-TCA[AG][AG]TTNC-3' motif present in the MEF3 element in the MYOG promoter and CIDEA enhancer. Regulates the expression of numerous genes, including MYC, CCND1 and EZR. Acts as an activator of the IGFBP5 promoter, probably coactivated by EYA2. Repression of precursor cell proliferation in myoblasts is switched to activation through recruitment of EYA3 to the SIX1-DACH1 complex. During myogenesis, seems to act together with EYA2 and DACH2. Regulates the expression of CCNA1. Promotes brown adipocyte differentiation. This Homo sapiens (Human) protein is Homeobox protein SIX1 (SIX1).